The following is a 966-amino-acid chain: Isoleucine--tRNA ligase (966 aa).

Residues 1 to 16 show a composition bias toward basic and acidic residues; that stretch reads MSDDKRAKSDKNEKNK. Residues 1 to 24 form a disordered region; that stretch reads MSDDKRAKSDKNEKNKYPVNLLDT. Residues 69–79 carry the 'HIGH' region motif; that stretch reads PYANGDIHIGH. Glutamate 599 lines the L-isoleucyl-5'-AMP pocket. Residues 640 to 644 carry the 'KMSKS' region motif; sequence KMSKS. Lysine 643 contributes to the ATP binding site. Cysteine 929, cysteine 932, cysteine 949, and cysteine 952 together coordinate Zn(2+).

Belongs to the class-I aminoacyl-tRNA synthetase family. IleS type 1 subfamily. In terms of assembly, monomer. Requires Zn(2+) as cofactor.

The protein localises to the cytoplasm. It carries out the reaction tRNA(Ile) + L-isoleucine + ATP = L-isoleucyl-tRNA(Ile) + AMP + diphosphate. Its function is as follows. Catalyzes the attachment of isoleucine to tRNA(Ile). As IleRS can inadvertently accommodate and process structurally similar amino acids such as valine, to avoid such errors it has two additional distinct tRNA(Ile)-dependent editing activities. One activity is designated as 'pretransfer' editing and involves the hydrolysis of activated Val-AMP. The other activity is designated 'posttransfer' editing and involves deacylation of mischarged Val-tRNA(Ile). The sequence is that of Isoleucine--tRNA ligase from Cupriavidus taiwanensis (strain DSM 17343 / BCRC 17206 / CCUG 44338 / CIP 107171 / LMG 19424 / R1) (Ralstonia taiwanensis (strain LMG 19424)).